A 142-amino-acid polypeptide reads, in one-letter code: Large ribosomal subunit protein uL11 (142 aa).

Belongs to the universal ribosomal protein uL11 family. Part of the ribosomal stalk of the 50S ribosomal subunit. Interacts with L10 and the large rRNA to form the base of the stalk. L10 forms an elongated spine to which L12 dimers bind in a sequential fashion forming a multimeric L10(L12)X complex. In terms of processing, one or more lysine residues are methylated.

Forms part of the ribosomal stalk which helps the ribosome interact with GTP-bound translation factors. In Shewanella piezotolerans (strain WP3 / JCM 13877), this protein is Large ribosomal subunit protein uL11.